A 427-amino-acid chain; its full sequence is Glutamate-1-semialdehyde 2,1-aminomutase (427 aa).

An N6-(pyridoxal phosphate)lysine modification is found at Lys-265.

This sequence belongs to the class-III pyridoxal-phosphate-dependent aminotransferase family. HemL subfamily. As to quaternary structure, homodimer. Pyridoxal 5'-phosphate is required as a cofactor.

The protein resides in the cytoplasm. It carries out the reaction (S)-4-amino-5-oxopentanoate = 5-aminolevulinate. It functions in the pathway porphyrin-containing compound metabolism; protoporphyrin-IX biosynthesis; 5-aminolevulinate from L-glutamyl-tRNA(Glu): step 2/2. The chain is Glutamate-1-semialdehyde 2,1-aminomutase from Neisseria meningitidis serogroup C / serotype 2a (strain ATCC 700532 / DSM 15464 / FAM18).